We begin with the raw amino-acid sequence, 557 residues long: Dihydroxy-acid dehydratase (557 aa).

A Mg(2+)-binding site is contributed by Asp-78. Position 119 (Cys-119) interacts with [2Fe-2S] cluster. Asp-120 and Lys-121 together coordinate Mg(2+). At Lys-121 the chain carries N6-carboxylysine. Cys-191 contacts [2Fe-2S] cluster. Glu-442 contacts Mg(2+). Catalysis depends on Ser-468, which acts as the Proton acceptor.

The protein belongs to the IlvD/Edd family. As to quaternary structure, homodimer. [2Fe-2S] cluster serves as cofactor. Requires Mg(2+) as cofactor.

It catalyses the reaction (2R)-2,3-dihydroxy-3-methylbutanoate = 3-methyl-2-oxobutanoate + H2O. The catalysed reaction is (2R,3R)-2,3-dihydroxy-3-methylpentanoate = (S)-3-methyl-2-oxopentanoate + H2O. The protein operates within amino-acid biosynthesis; L-isoleucine biosynthesis; L-isoleucine from 2-oxobutanoate: step 3/4. Its pathway is amino-acid biosynthesis; L-valine biosynthesis; L-valine from pyruvate: step 3/4. Functions in the biosynthesis of branched-chain amino acids. Catalyzes the dehydration of (2R,3R)-2,3-dihydroxy-3-methylpentanoate (2,3-dihydroxy-3-methylvalerate) into 2-oxo-3-methylpentanoate (2-oxo-3-methylvalerate) and of (2R)-2,3-dihydroxy-3-methylbutanoate (2,3-dihydroxyisovalerate) into 2-oxo-3-methylbutanoate (2-oxoisovalerate), the penultimate precursor to L-isoleucine and L-valine, respectively. The polypeptide is Dihydroxy-acid dehydratase (Lachnospira eligens (strain ATCC 27750 / DSM 3376 / VPI C15-48 / C15-B4) (Eubacterium eligens)).